We begin with the raw amino-acid sequence, 107 residues long: Endonuclease ALBA3 (107 aa).

N6-acetyllysine occurs at positions 23 and 32.

The protein belongs to the histone-like Alba family. As to quaternary structure, homodimer. Interacts (acetylated and unacetylated) with Sir2A. A divalent metal cation serves as cofactor. Acetylated. Exists in both acetylated and unacetylated forms but predominantly in an acetylated form. Deacetylated by Sir2A.

It is found in the nucleus. It localises to the chromosome. The protein localises to the telomere. Its subcellular location is the cytoplasm. Mild acetylation lowers protein interaction with DNA and high acetylation abolishes DNA-binding activity. DNA binding and endonuclease activity is modulated via deacetylation of Lys-23 by Sir2A. Inhibited in the presence of EDTA and EGTA. Possesses DNA-binding and endonuclease activities. Binds DNA cooperatively in sequence-independent manner at the DNA minor groove. Exhibits apurinic/apyrimidinic site-driven endonuclease activity. Binds RNA; shows high affinity for poly(A) and a lower affinity for poly(U) templates. In vitro, prevents transcription after DNA binding. Associates with the telomeric region, the subtelomeric TARE6 repeat sequence and the var gene promoters. This Plasmodium falciparum (isolate 3D7) protein is Endonuclease ALBA3.